A 559-amino-acid chain; its full sequence is TBC1 domain family member 24 (559 aa).

A 1,2-diacyl-sn-glycero-3-phospho-(1D-myo-inositol) is bound by residues lysine 36, arginine 40, lysine 238, arginine 242, and arginine 293–arginine 297. In terms of domain architecture, Rab-GAP TBC spans serine 47–serine 262. The TLDc domain maps to glutamate 343–glutamine 554. Phosphoserine occurs at positions 473 and 480.

As to quaternary structure, interacts with ARF6. As to expression, highest expression in brain.

It localises to the cell membrane. Its subcellular location is the cytoplasm. The protein resides in the cytoplasmic vesicle membrane. The protein localises to the presynapse. Its function is as follows. May act as a GTPase-activating protein for Rab family protein(s). Involved in neuronal projections development, probably through a negative modulation of ARF6 function. Involved in the regulation of synaptic vesicle trafficking. The chain is TBC1 domain family member 24 (TBC1D24) from Homo sapiens (Human).